We begin with the raw amino-acid sequence, 299 residues long: Mycothiol acetyltransferase (299 aa).

2 consecutive N-acetyltransferase domains span residues 1 to 156 (MGWT…TYRG) and 149 to 299 (VTMR…ARAL). E33 provides a ligand contact to 1D-myo-inositol 2-(L-cysteinylamino)-2-deoxy-alpha-D-glucopyranoside. Acetyl-CoA contacts are provided by residues 75–77 (LVV) and 83–88 (RRGIGT). 1D-myo-inositol 2-(L-cysteinylamino)-2-deoxy-alpha-D-glucopyranoside contacts are provided by E176, K218, and E231. Residues 235–237 (VGI) and 242–248 (QGRGLGR) contribute to the acetyl-CoA site. Y269 contributes to the 1D-myo-inositol 2-(L-cysteinylamino)-2-deoxy-alpha-D-glucopyranoside binding site. 274-279 (NTAALH) contacts acetyl-CoA.

The protein belongs to the acetyltransferase family. MshD subfamily. In terms of assembly, monomer.

It carries out the reaction 1D-myo-inositol 2-(L-cysteinylamino)-2-deoxy-alpha-D-glucopyranoside + acetyl-CoA = mycothiol + CoA + H(+). Its function is as follows. Catalyzes the transfer of acetyl from acetyl-CoA to desacetylmycothiol (Cys-GlcN-Ins) to form mycothiol. This is Mycothiol acetyltransferase from Rhodococcus erythropolis (strain PR4 / NBRC 100887).